The sequence spans 2039 residues: Methylcytosine dioxygenase TET1 (2039 aa).

Over residues 1–19 (MSRSRPAKPSKSVKTKLQK) the composition is skewed to basic residues. Disordered stretches follow at residues 1–79 (MSRS…AGAA), 119–168 (VVTP…NGEQ), and 227–286 (DNEC…GFPD). 2 stretches are compositionally biased toward basic and acidic residues: residues 53–65 (KRRD…EDKT) and 138–149 (IQDEPGVKHSEN). 2 stretches are compositionally biased toward polar residues: residues 150 to 168 (DSVP…NGEQ) and 241 to 265 (QRST…SQVE). The tract at residues 512-657 (LDLTQGSQAA…NGPKSESMDC (146 aa)) is sufficient for binding to genomic CpG islands. The CXXC-type zinc finger occupies 567–608 (ERRKRKACGVCEPCQQKANCGECTYCKNRKNSHQICKKRKCE). Residues cysteine 574, cysteine 577, cysteine 580, cysteine 586, cysteine 589, cysteine 592, cysteine 602, and cysteine 607 each contribute to the Zn(2+) site. Disordered stretches follow at residues 613–670 (KPEA…QRLD), 711–735 (CDAN…NPSP), 820–859 (GAEP…VQPS), 882–906 (QLSE…HQKT), 964–993 (QGYP…SHPL), 1050–1129 (VRNA…KKQE), 1209–1240 (VEPS…QGQP), and 1322–1341 (KREA…DSAQ). Residues 653–670 (ESMDCSRRGHGEEEQRLD) are compositionally biased toward basic and acidic residues. Residues 825–835 (IFNNHPNTHSA) show a composition bias toward polar residues. Residues 840–852 (HPPEKVPNKEPKD) show a composition bias toward basic and acidic residues. At serine 854 the chain carries Phosphoserine. The segment covering 884–894 (SEAPSESSSPS) has biased composition (low complexity). Residues 895–904 (KPEKDEEAHQ) are compositionally biased toward basic and acidic residues. The segment covering 1053–1064 (AESTPESLVAKN) has biased composition (polar residues). Residues 1094–1116 (KPKKAQKKARATPHANKRKKKPP) are compositionally biased toward basic residues. Composition is skewed to polar residues over residues 1214 to 1227 (SLPT…SGGQ) and 1326 to 1341 (QTSS…DSAQ). The Zn(2+) site is built by cysteine 1371, cysteine 1373, cysteine 1430, histidine 1456, and cysteine 1458. Arginine 1499 provides a ligand contact to 2-oxoglutarate. Zn(2+)-binding residues include cysteine 1509, cysteine 1511, cysteine 1527, and cysteine 1536. The interval 1528–1541 (SWSMYFNGCKFGRS) is interaction with DNA. Lysine 1537 participates in a covalent cross-link: Glycyl lysine isopeptide (Lys-Gly) (interchain with G-Cter in ubiquitin). Cysteine 1628 serves as a coordination point for Zn(2+). A 2-oxoglutarate-binding site is contributed by cysteine 1644. Position 1650 (histidine 1650) interacts with Zn(2+). Positions 1652 and 1654 each coordinate Fe cation. Residue asparagine 1657 participates in substrate binding. 2-oxoglutarate is bound at residue histidine 1685. Residues 1734–1743 (GKRAKMKQNH) show a composition bias toward basic residues. Disordered regions lie at residues 1734–1760 (GKRA…ASST) and 1830–1901 (AAHP…LPQL). A compositionally biased stretch (low complexity) spans 1748 to 1760 (SHNTKSFSSASST). Positions 1850-1875 (TSPSEQLTSNQSNQQLPLLSNSQKLA) are enriched in polar residues. Basic and acidic residues predominate over residues 1880–1895 (EDERHPEADEPQHPED). Position 1939 (histidine 1939) interacts with Fe cation. Position 1954-1956 (1954-1956 (RVS)) interacts with 2-oxoglutarate. 1960–1962 (YQH) contacts substrate. Residue histidine 1970 coordinates Zn(2+).

Belongs to the TET family. As to quaternary structure, interacts with SIN3A; recruits the transcriptional co-repressor SIN3A to gene promoters. Interacts with HCFC1. Interacts (via C-terminus) with OGT. Found in a complex composed of at least SINHCAF, SIN3A, HDAC1, SAP30, RBBP4, OGT and TET1. Interacts with QSER1. Interacts with NONO (via DNA-binding domain); this interaction recruits TET1 to genomic loci. Interacts with FOXA2; this interaction may recruit TET1 to specific enhancers to preserve their unmethylated status and hence allowing gene expression. Interacts with RNF2. Directly interacts (via C-terminus) with the DCAF1 component of the CRL4(VprBP) E3 ubiquitin-protein ligase complex. In terms of assembly, interacts with UHRF1; this interaction induces the recruitment of TET1 to replicating heterochromatin. Interacts with DCAF1. It depends on Fe(2+) as a cofactor. The cofactor is Zn(2+). Post-translationally, glycosylated. Interaction with OGT leads to GlcNAcylation. Monoubiquitinated by the DCX (DDB1-CUL4-X-box) E3 ubiquitin-protein ligase complex called CRL4(VprBP) or CUL4A-RBX1-DDB1-DCAF1/VPRBP complex. In terms of processing, monoubiquitinated by the DCX (DDB1-CUL4-X-box) E3 ubiquitin-protein ligase complex called CRL4(VprBP) or CUL4A-RBX1-DDB1-DCAF1/VPRBP complex; this modification promotes binding to DNA. Expressed in germinal vesicle (GV) stage and MII-stage oocytes and in early embryos. Also detected somatic tissues, including brain, liver and kidney, but at very low levels. As to expression, predominantly expressed in early embryos. Also expressed in embryonic stem cells and in primordial germ cells. Expressed in adult tissues, including brain cortex, cerebellum, heart, kidney, liver, muscle and spleen, although at much lower levels than isoform 2. In the brain, expressed at higher levels in glial cells than in neurons. Expressed in placenta. Expressed in the pituitary, most probably in thyrotropes. In terms of tissue distribution, preferentially expressed in differentiated cells, including in cerebral cortex, cerebellum and thymus. Also expressed in heart, kidney, liver, muscle and spleen at much higher levels than isoform 1. In the brain, expressed at higher levels in neurons than in glial cells. Expressed in the olfactory bulb and in the mammary gland.

The protein resides in the nucleus. It localises to the chromosome. It carries out the reaction a 5-methyl-2'-deoxycytidine in DNA + 2-oxoglutarate + O2 = a 5-hydroxymethyl-2'-deoxycytidine in DNA + succinate + CO2. The catalysed reaction is a 5-hydroxymethyl-2'-deoxycytidine in DNA + 2-oxoglutarate + O2 = a 5-formyl-2'-deoxycytidine in DNA + succinate + CO2 + H2O. It catalyses the reaction a 5-formyl-2'-deoxycytidine in DNA + 2-oxoglutarate + O2 = a 5-carboxyl-2'-deoxycytidine in DNA + succinate + CO2 + H(+). Its function is as follows. Dioxygenase that plays a key role in active DNA demethylation, by catalyzing the sequential oxidation of the modified genomic base 5-methylcytosine (5mC) into 5-hydroxymethylcytosine (5hmC), 5-formylcytosine (5fC), and 5-carboxylcytosine (5caC). In addition to its role in DNA demethylation, plays a more general role in chromatin regulation by recruiting histone modifying protein complexes to alter histone marks and chromatin accessibility, leading to both activation and repression of gene expression. Plays therefore a role in many biological processes, including stem cell maintenance, T- and B-cell development, inflammation regulation, iron homeostasis, neural activity or DNA repair. Involved in the balance between pluripotency and lineage commitment of cells it plays a role in embryonic stem cells maintenance and inner cell mass cell specification. Together with QSER1, plays an essential role in the protection and maintenance of transcriptional and developmental programs to inhibit the binding of DNMT3A/3B and therefore de novo methylation. May play a role in the pancreatic beta-cell specification during development. In this context, may function as an upstream epigenetic regulator of PAX4 presumably through direct recruitment by FOXA2 to a PAX4 enhancer to preserve its unmethylated status, thereby potentiating PAX4 expression to adopt beta-cell fate during endocrine lineage commitment. Under DNA hypomethylation conditions, such as in female meiotic germ cells, may induce epigenetic reprogramming of pericentromeric heterochromatin (PCH), the constitutive heterochromatin of pericentromeric regions. PCH forms chromocenters in the interphase nucleus and chromocenters cluster at the prophase of meiosis. In this context, may also be essential for chromocenter clustering in a catalytic activity-independent manner, possibly through the recruitment polycomb repressive complex 1 (PRC1) to the chromocenters. During embryonic development, may be required for normal meiotic progression in oocytes and meiotic gene activation. Binds preferentially to DNA containing cytidine-phosphate-guanosine (CpG) dinucleotides over CpH (H=A, T, and C), hemimethylated-CpG and hemimethylated-hydroxymethyl-CpG. In terms of biological role, dioxygenase that plays a key role in active DNA demethylation. Binds to promoters, particularly to those with high CG content. In hippocampal neurons, isoform 1 regulates the expression of a unique subset of genes compared to isoform 2, although some overlap between both isoforms, hence differentially regulates excitatory synaptic transmission. In hippocampal neuron cell cultures, isoform 1 controls both miniature excitatory postsynaptic current amplitude and frequency. Isoform 1 may regulate genes involved in hippocampal-dependent memory, leading to positive regulation of memory, contrary to isoform 2 that may decrease memory. Functionally, dioxygenase that plays a key role in active DNA demethylation. As isoform 1, binds to promoters, particularly to those with high CG content, however displays reduced global chromatin affinity compared with isoform 1, leading to decreased global DNA demethylation compared with isoform 1. Contrary to isoform 1, isoform 2 localizes during S phase to sites of ongoing DNA replication in heterochromatin, causing a significant de novo 5hmC formation, globally, and more so in heterochromatin, including LINE 1 interspersed DNA repeats leading to their activation. In hippocampal neurons, isoform 2 regulates the expression of a unique subset of genes compared with isoform 1, although some overlap between both isoforms, hence differentially regulating excitatory synaptic transmission. In hippocampal neuron cell cultures, isoform 2 controls miniature excitatory postsynaptic current frequency, but not amplitude. Isoform 2 may regulate genes involved in hippocampal-dependent memory, leading to negative regulation of memory, contrary to isoform 1 that may improve memory. In immature and partially differentiated gonadotrope cells, represses luteinizing hormone gene LHB expression directly and does not catalyze 5hmC at the gene promoter. The chain is Methylcytosine dioxygenase TET1 (Tet1) from Mus musculus (Mouse).